The sequence spans 116 residues: Nucleoid-associated protein SACE_0254 (116 aa).

Residues 90-116 form a disordered region; that stretch reads LQQEKMGPVTGALGGGQGLGGLGLPGL. The span at 101–116 shows a compositional bias: gly residues; it reads ALGGGQGLGGLGLPGL.

Belongs to the YbaB/EbfC family. Homodimer.

The protein localises to the cytoplasm. Its subcellular location is the nucleoid. In terms of biological role, binds to DNA and alters its conformation. May be involved in regulation of gene expression, nucleoid organization and DNA protection. This is Nucleoid-associated protein SACE_0254 from Saccharopolyspora erythraea (strain ATCC 11635 / DSM 40517 / JCM 4748 / NBRC 13426 / NCIMB 8594 / NRRL 2338).